Consider the following 201-residue polypeptide: Large ribosomal subunit protein uL4 (201 aa).

Positions 46 to 71 (QKTRAEVVGSGKKPWRQKGTGRARAG) are disordered.

Belongs to the universal ribosomal protein uL4 family. In terms of assembly, part of the 50S ribosomal subunit.

One of the primary rRNA binding proteins, this protein initially binds near the 5'-end of the 23S rRNA. It is important during the early stages of 50S assembly. It makes multiple contacts with different domains of the 23S rRNA in the assembled 50S subunit and ribosome. Functionally, forms part of the polypeptide exit tunnel. This is Large ribosomal subunit protein uL4 from Shewanella woodyi (strain ATCC 51908 / MS32).